The following is a 420-amino-acid chain: WD repeat-containing protein jip5 (420 aa).

WD repeat units lie at residues P9–D48, R72–K111, D117–S158, V221–E262, G271–E314, and D318–V355. Residues R39–H63 form a disordered region. Residues D350–D420 form a disordered region. Residues D368 to D387 show a composition bias toward acidic residues. Over residues D394–K406 the composition is skewed to basic residues.

This sequence belongs to the WD repeat WDR55 family.

The protein localises to the nucleus. It localises to the nucleolus. The sequence is that of WD repeat-containing protein jip5 (jip5) from Aspergillus terreus (strain NIH 2624 / FGSC A1156).